The sequence spans 1049 residues: Cilia- and flagella-associated protein 337 (1049 aa).

In terms of domain architecture, EF-hand spans Gly-81 to Glu-116. WD repeat units lie at residues Lys-138–Phe-177, Asn-358–Gly-397, Gly-401–Arg-440, Ser-487–Thr-528, His-531–Leu-570, and Gln-633–Val-671. Residues Leu-691–Arg-712 form a disordered region. A compositionally biased stretch (polar residues) spans Gly-695 to Val-711. WD repeat units follow at residues Glu-719–Glu-766, Ala-769–Ser-809, and Pro-825–Phe-866.

The protein belongs to the CFAP337 family. In terms of assembly, associates with components of the nexin-dynein regulatory complex (N-DRC) and the CFAP184:CFAP263 complex.

Its subcellular location is the cell projection. The protein localises to the cilium. Associates with components of the nexin-dynein regulatory complex (N-DRC), a key regulator of ciliary/flagellar motility, and might act as an inner dynein arm (IDA) hub or linkage. This is Cilia- and flagella-associated protein 337 from Homo sapiens (Human).